The following is a 24-amino-acid chain: FLPAIAGVAAKFLPKIFCAISKKC.

Cys18 and Cys24 are disulfide-bonded.

In terms of tissue distribution, expressed by the skin glands.

Its subcellular location is the secreted. Its function is as follows. Antibacterial activity against Gram-positive bacterium S.aureus and Gram-negative bacterium E.coli. Has activity against C.albicans. This Lithobates berlandieri (Rio Grande leopard frog) protein is Brevinin-1Bd.